We begin with the raw amino-acid sequence, 111 residues long: MIVEPMTKPRKPTVQRCQSFFTNGANHFYCKKSTHDGGRTHNLLIRSQTRCHYATRATVCWKFSIINKYIPTLANITITTLRKLYKRFIDRESLFLIFFRKDEHIVQNIIN.

This is an uncharacterized protein from Saccharomyces cerevisiae (strain ATCC 204508 / S288c) (Baker's yeast).